A 288-amino-acid chain; its full sequence is Acyl-CoA-binding domain-containing protein 6 homolog (288 aa).

The ACB domain maps to 6 to 94 (IENKFKLAVD…VNALSPGWDS (89 aa)). Residues 36–40 (YCNYK), Lys-62, and Tyr-81 contribute to the an acyl-CoA site. ANK repeat units lie at residues 200–229 (DGRTALIWACDRGYFEIAKLLIENGSNVNV) and 233–263 (EGMTPLHYAVVCDQFEICKLLLSQSSIDKSI).

It localises to the cytoplasm. Binds long-chain acyl-coenzyme A molecules with a strong preference for unsaturated C18:1-CoA. Does not bind fatty acids. Plays a role in protein N-myristoylation. In Dictyostelium discoideum (Social amoeba), this protein is Acyl-CoA-binding domain-containing protein 6 homolog (acbd6).